Reading from the N-terminus, the 429-residue chain is MLDPNILRNELGAVAEKLARRGYTLDVDTLRKQEERRKVLQVETETLQAERNSRSKAIGAAKARGEDIDPLRQEVNQLGEKLDTAKAELEKLQAEIRDLALSIPNIPDDSVPVGKDENDNLEVSRWGEPGKYDFEIQDHVSLGELTNGLDFAAAVKLTGSRFVVMKGQIARLHRALAQFMLNLHTEQHGYLETYVPYLVNHETLYGTGQLPKFGEDLFHTKPLEEEAESHYALIPTAEVPITNLVRGDILDENELPLKMTAHTPCFRSEAGSYGRDTRGLIRMHQFDKVELVQIVHPDESMDALEALTGHAEKVLQLLNLPYRKVLLCTGDMGFSACKTYDLEVWLPAQNTYREISSCSNMWDFQARRMQARFRGKEDKKTQLLHTLNGSGLAVGRTLVAVMENYQQADGRIEIPEVLRPYMGGLEYIG.

236-238 lines the L-serine pocket; it reads TAE. 267–269 serves as a coordination point for ATP; it reads RSE. Residue Glu-290 participates in L-serine binding. An ATP-binding site is contributed by 354-357; the sequence is EISS. Ser-390 serves as a coordination point for L-serine.

This sequence belongs to the class-II aminoacyl-tRNA synthetase family. Type-1 seryl-tRNA synthetase subfamily. Homodimer. The tRNA molecule binds across the dimer.

Its subcellular location is the cytoplasm. It carries out the reaction tRNA(Ser) + L-serine + ATP = L-seryl-tRNA(Ser) + AMP + diphosphate + H(+). The catalysed reaction is tRNA(Sec) + L-serine + ATP = L-seryl-tRNA(Sec) + AMP + diphosphate + H(+). It participates in aminoacyl-tRNA biosynthesis; selenocysteinyl-tRNA(Sec) biosynthesis; L-seryl-tRNA(Sec) from L-serine and tRNA(Sec): step 1/1. Its function is as follows. Catalyzes the attachment of serine to tRNA(Ser). Is also able to aminoacylate tRNA(Sec) with serine, to form the misacylated tRNA L-seryl-tRNA(Sec), which will be further converted into selenocysteinyl-tRNA(Sec). This is Serine--tRNA ligase from Photorhabdus laumondii subsp. laumondii (strain DSM 15139 / CIP 105565 / TT01) (Photorhabdus luminescens subsp. laumondii).